We begin with the raw amino-acid sequence, 316 residues long: DNA-directed RNA polymerase subunit alpha (316 aa).

Residues 1–230 form an alpha N-terminal domain (alpha-NTD) region; that stretch reads MIEFEKPNIH…EHLAMFVDLT (230 aa). The alpha C-terminal domain (alpha-CTD) stretch occupies residues 247–316; that stretch reads KEKMLEMTIE…DLGLSLRKED (70 aa).

This sequence belongs to the RNA polymerase alpha chain family. In terms of assembly, homodimer. The RNAP catalytic core consists of 2 alpha, 1 beta, 1 beta' and 1 omega subunit. When a sigma factor is associated with the core the holoenzyme is formed, which can initiate transcription.

The enzyme catalyses RNA(n) + a ribonucleoside 5'-triphosphate = RNA(n+1) + diphosphate. DNA-dependent RNA polymerase catalyzes the transcription of DNA into RNA using the four ribonucleoside triphosphates as substrates. In Levilactobacillus brevis (strain ATCC 367 / BCRC 12310 / CIP 105137 / JCM 1170 / LMG 11437 / NCIMB 947 / NCTC 947) (Lactobacillus brevis), this protein is DNA-directed RNA polymerase subunit alpha.